The primary structure comprises 417 residues: Signal recognition particle receptor FtsY (417 aa).

Residues 228–235, 310–314, and 368–371 contribute to the GTP site; these read GINGTGKT, DTAGR, and TKID.

It belongs to the GTP-binding SRP family. FtsY subfamily. As to quaternary structure, part of the signal recognition particle protein translocation system, which is composed of SRP and FtsY.

It localises to the cell membrane. The protein localises to the cytoplasm. The catalysed reaction is GTP + H2O = GDP + phosphate + H(+). Its function is as follows. Involved in targeting and insertion of nascent membrane proteins into the cytoplasmic membrane. Acts as a receptor for the complex formed by the signal recognition particle (SRP) and the ribosome-nascent chain (RNC). The chain is Signal recognition particle receptor FtsY from Methanosarcina acetivorans (strain ATCC 35395 / DSM 2834 / JCM 12185 / C2A).